Consider the following 1686-residue polypeptide: Thrombospondin type-1 domain-containing protein 7A (1686 aa).

The first 36 residues, 1 to 36, serve as a signal peptide directing secretion; it reads MGLASRAPGKGGTSAGALASLFRVALLFFGLWDVQT. At 37-1635 the chain is on the extracellular side; sequence QTVANTRPTY…FGPDGKLKTW (1599 aa). TSP type-1 domains are found at residues 44-103, 107-181, and 183-236; these read PTYI…RVCD, ELYD…IPCP, and DCVV…GKCE. A glycan (N-linked (GlcNAc...) asparagine) is linked at N223. The interval 257 to 321 is disordered; sequence IRQARDTGEA…EKKRMRDPET (65 aa). Basic and acidic residues-rich tracts occupy residues 259–272 and 294–321; these read QARD…PKAE and EKKE…DPET. TSP type-1 domains are found at residues 385–441, 448–535, 537–596, 656–717, 718–797, 799–859, 860–932, 934–985, 988–1061, 1063–1123, 1124–1191, 1193–1247, 1248–1311, 1313–1368, 1369–1439, and 1441–1502; these read DCEV…SPQG, VVYN…IPCP, ECEV…PSCY, DCVL…HPCT, VYHW…LPCK, DCVV…SVCP, GYRW…LPCQ, DCQL…QYCP, KYNA…IPCP, DCKL…SDCS, QYVW…LPCP, DCVL…SNCF, HYSY…VECP, NCQL…KPCF, SWRY…VPCP, and ECYL…GQCY. Cystine bridges form between C460–C530, C480–C534, and C491–C519. N-linked (GlcNAc...) asparagine glycosylation occurs at N475. N525 carries N-linked (GlcNAc...) asparagine glycosylation. Disulfide bonds link C657–C699 and C668–C672. The N-linked (GlcNAc...) asparagine glycan is linked to N701. Cystine bridges form between C711–C716, C729–C792, C756–C796, C767–C780, C800–C842, C811–C815, and C852–C858. An N-linked (GlcNAc...) asparagine glycan is attached at N739. The N-linked (GlcNAc...) asparagine glycan is linked to N996. Intrachain disulfides connect C1000-C1056, C1022-C1060, C1033-C1046, C1064-C1101, C1075-C1079, and C1118-C1122. A glycan (N-linked (GlcNAc...) asparagine) is linked at N1071. N-linked (GlcNAc...) asparagine glycosylation is present at N1212. C1240 and C1246 are joined by a disulfide. An N-linked (GlcNAc...) asparagine glycan is attached at N1252. 12 cysteine pairs are disulfide-bonded: C1259/C1306, C1267/C1310, C1278/C1291, C1314/C1352, C1325/C1329, C1362/C1367, C1378/C1434, C1385/C1438, C1396/C1415, C1442/C1486, C1453/C1457, and C1496/C1501. An N-linked (GlcNAc...) asparagine glycan is attached at N1303. N1393 carries N-linked (GlcNAc...) asparagine glycosylation. A glycan (N-linked (GlcNAc...) asparagine) is linked at N1527. The helical transmembrane segment at 1636–1656 threads the bilayer; that stretch reads VYGVAAGAFVLLVFIVSMTYL. The Cytoplasmic portion of the chain corresponds to 1657–1686; that stretch reads ACKKPKKPQRRQMNNRLKPLTLAYDGDADM.

Post-translationally, extensively N-glycosylated.

Its subcellular location is the cell membrane. The protein resides in the cell projection. Its function is as follows. Required for normal sprouting angiogenesis and normal embryonic development of intersegmental vessels (ISV). Required for normal function of the glomerular filtration barrier. Required for normal axon outgrowth on embryonic motor neurons at the level of the horizontal myoseptum. Required for normal expression of notch1b, suggesting that its functions in angiogenesis and neuron outgrowth are due to decreased expression of notch1b. Plays a role in actin cytoskeleton rearrangement. The protein is Thrombospondin type-1 domain-containing protein 7A of Danio rerio (Zebrafish).